We begin with the raw amino-acid sequence, 789 residues long: MEGPSGSAQGSEWPLLTVTHELRNANLTGHAEKVGIENFELLKVLGTGAYGKVFLVRKVSGHDAGKLYAMKVLKKATIVQKAKTTEHTRTERQVLEHIRQSPFLVTLHYAFQTDTKLHLILDYINGGELFTHLSQRERFSENEVQIYIGEIVLALEHLHKLGIIYRDIKLENILLDSDGHVVLTDFGLSKEFLTDENERAYSFCGTIEYMAPDIVRGGDTGHDKAVDWWSVGVLMYELLTGASPFTVDGEKNSQAEISRRILKSEPPYPQEMSALSKDIIQRLLMKDPKKRLGCGPTDADEIKQHPFFQNINWDDLAAKKVPAPFKPVIRDELDVSNFAEEFTEMDPTYSPAATPQTSEKIFQGYSFVAPSILFKRNAATVDPVQFYVGDERPGTTTIARSAMMKDSPFFQHYELDLKEKPLGEGSFSICRKCLHKKTSQEYAVKIISKRMEANTQREITALKLCEGHPNVVKLHEVYHDQLHTFLVMELLKGGELLERIQKKQHFSETEASHIMRRLVSAVSHMHDVGVVHRDLKPENLLFTDETDNSEIKIIDFGFARLKPPDNQPLKTPCFTLHYAAPELFNHNGYDESCDLWSLGVILYTMLSGQVPFQSQDKSLTCTSALEIMKKIKKGEFSFEGEAWKNVSEEAKELIQGLLTVDPNKRIKMSSLRYNEWLQDGSQLSSNPLMTPDNLGSSGAAVHTYVKATFHAFNKYKREGFCLQNVDKAPLAKRRKMKKTSTSTETRSSSSESSHSSSSHSHGKTTPTKTLQPTNPTDSNNPETIFQFSD.

The 270-residue stretch at 39–308 (FELLKVLGTG…ADEIKQHPFF (270 aa)) folds into the Protein kinase 1 domain. ATP-binding positions include 45–53 (LGTGAYGKV) and lysine 71. Aspartate 167 (proton acceptor) is an active-site residue. Serine 202 is subject to Phosphoserine; by autocatalysis. Positions 309-377 (QNINWDDLAA…VAPSILFKRN (69 aa)) constitute an AGC-kinase C-terminal domain. Serine 350 carries the phosphoserine modification. Phosphoserine; by autocatalysis occurs at positions 366 and 371. A Protein kinase 2 domain is found at 416 to 677 (DLKEKPLGEG…MSSLRYNEWL (262 aa)). Residues 422–430 (LGEGSFSIC) and lysine 445 each bind ATP. Aspartate 534 functions as the Proton acceptor in the catalytic mechanism. Phosphothreonine is present on residues threonine 571 and threonine 690. Residues 731–789 (AKRRKMKKTSTSTETRSSSSESSHSSSSHSHGKTTPTKTLQPTNPTDSNNPETIFQFSD) form a disordered region. Residues 739–769 (TSTSTETRSSSSESSHSSSSHSHGKTTPTKT) show a composition bias toward low complexity. Residues serine 740, serine 742, and serine 748 each carry the phosphoserine; by autocatalysis modification. Over residues 770 to 789 (LQPTNPTDSNNPETIFQFSD) the composition is skewed to polar residues.

Belongs to the protein kinase superfamily. AGC Ser/Thr protein kinase family. S6 kinase subfamily. Mg(2+) is required as a cofactor. In terms of processing, ser-366 and Thr-571 phosphorylation is required for kinase activity. Ser-366 and Ser-202 are autophosphorylated by the C-terminal kinase domain, and their phosphorylation is essential for the catalytic activity of the N-terminal kinase domain. Phosphorylated at Ser-350, Thr-571 and Thr-690 by MAP kinases. Autophosphorylated at Ser-740, Ser-742 and Ser-748 by the N-terminal kinase domain. Widely expressed with high levels in heart, brain and placenta. Less abundant in lung, kidney and liver.

It is found in the nucleus. The catalysed reaction is L-seryl-[protein] + ATP = O-phospho-L-seryl-[protein] + ADP + H(+). It catalyses the reaction L-threonyl-[protein] + ATP = O-phospho-L-threonyl-[protein] + ADP + H(+). Its activity is regulated as follows. Activated by phosphorylation at Ser-350, Thr-571 and Thr-690 by MAP kinases, and by further autophosphorylation of Ser-202, Ser-366 and Ser-371 by the activated C-terminal kinase domain. The active N-terminal kinase domain finally phosphorylates downstream substrates, as well as Ser-740, Ser-742 and Ser-748 in its own C-terminal region. Functionally, serine/threonine-protein kinase that is required for the mitogen or stress-induced phosphorylation of the transcription factors CREB1 and ATF1 and that contributes to gene activation by histone phosphorylation. Phosphorylates CREB1 and ATF1 in response to mitogenic or stress stimuli such as UV-C irradiation, epidermal growth factor (EGF) and anisomycin. Directly represses transcription via phosphorylation of 'Ser-1' of histone H2A. Phosphorylates 'Ser-10' of histone H3 in response to mitogenics, stress stimuli and EGF, which results in the transcriptional activation of several immediate early genes, including proto-oncogenes c-fos/FOS and c-jun/JUN. May also phosphorylate 'Ser-28' of histone H3. Mediates the mitogen- and stress-induced phosphorylation of high mobility group protein 1 (HMGN1/HMG14). The polypeptide is Ribosomal protein S6 kinase alpha-5 (RPS6KA5) (Gallus gallus (Chicken)).